The following is a 197-amino-acid chain: Probable GTP-binding protein EngB (197 aa).

The 174-residue stretch at 22 to 195 (ALPELALVGR…WQWIEERTGV (174 aa)) folds into the EngB-type G domain. Residues 30–37 (GRSNVGKS), 57–61 (GKTQT), 75–78 (DVPG), 142–145 (TKVD), and 174–176 (FSA) contribute to the GTP site. Positions 37 and 59 each coordinate Mg(2+).

It belongs to the TRAFAC class TrmE-Era-EngA-EngB-Septin-like GTPase superfamily. EngB GTPase family. It depends on Mg(2+) as a cofactor.

In terms of biological role, necessary for normal cell division and for the maintenance of normal septation. The protein is Probable GTP-binding protein EngB of Limosilactobacillus fermentum (strain NBRC 3956 / LMG 18251) (Lactobacillus fermentum).